Here is a 137-residue protein sequence, read N- to C-terminus: uncharacterized protein (137 aa).

Positions 1-26 are disordered; that stretch reads MKDKMWCEDTAQPHRRLPAPPSSSSP.

This is an uncharacterized protein from Homo sapiens (Human).